Here is a 64-residue protein sequence, read N- to C-terminus: Large ribosomal subunit protein bL35 (64 aa).

It belongs to the bacterial ribosomal protein bL35 family.

The protein is Large ribosomal subunit protein bL35 of Wolinella succinogenes (strain ATCC 29543 / DSM 1740 / CCUG 13145 / JCM 31913 / LMG 7466 / NCTC 11488 / FDC 602W) (Vibrio succinogenes).